A 951-amino-acid polypeptide reads, in one-letter code: Leucine-rich repeat-containing G-protein coupled receptor 4 (951 aa).

Positions 1–24 (MPGPLGLLCFLALGLLGSAGPSGA) are cleaved as a signal peptide. Residues 25–57 (APPLCAAPCSCDGDRRVDCSGKGLTAVPEGLSA) enclose the LRRNT domain. Residues 25-544 (APPLCAAPCS…LLGSWMIRLT (520 aa)) are Extracellular-facing. Intrachain disulfides connect Cys29–Cys35 and Cys33–Cys43. LRR repeat units lie at residues 58 to 79 (FTQA…AFKN), 82 to 103 (FLEE…ALSG), 106 to 127 (ELKV…AIRG), 130 to 151 (ALQS…SFEG), 154 to 177 (QLRH…SNLP), 178 to 199 (TLQA…AFTN), 202 to 223 (SLVV…CFDG), 226 to 247 (NLET…IKAL), 249 to 270 (SLKE…AFDG), and 273 to 294 (LLRT…AFHN). Asn68 carries N-linked (GlcNAc...) asparagine glycosylation. Asn199 carries N-linked (GlcNAc...) asparagine glycosylation. 2 N-linked (GlcNAc...) asparagine glycosylation sites follow: Asn294 and Asn314. LRR repeat units lie at residues 320–341 (HLES…LCQE), 344–365 (MLRT…NGCH), 366–387 (ALEE…TFQG), 390–411 (SLRI…AFAT), and 414–435 (PITN…GLNG). The cysteines at positions 339 and 364 are disulfide-linked. Disulfide bonds link Cys470–Cys522 and Cys471–Cys476. N-linked (GlcNAc...) asparagine glycosylation occurs at Asn505. A helical membrane pass occupies residues 545-565 (VWFIFLVALFFNLLVILTTFA). Topologically, residues 566-575 (SCTSLPSSKL) are cytoplasmic. A helical transmembrane segment spans residues 576-596 (FIGLISVSNLFMGIYTGILTF). Over 597 to 620 (LDAVSWGRFAEFGIWWETGSGCKV) the chain is Extracellular. Cys618 and Cys693 are disulfide-bonded. The helical transmembrane segment at 621–641 (AGFLAVFSSESAIFLLMLATV) threads the bilayer. At 642–661 (ERSLSAKDIMKNGKSNHLKQ) the chain is on the cytoplasmic side. The chain crosses the membrane as a helical span at residues 662-682 (FRVAALLAFLGATVAGCFPLF). The Extracellular segment spans residues 683 to 703 (HRGEYSASPLCLPFPTGETPS). Residues 704 to 724 (LGFTVTLVLLNSLAFLLMAVI) form a helical membrane-spanning segment. Residues 725–756 (YTKLYCNLEKEDLSENSQSSMIKHVAWLIFTN) lie on the Cytoplasmic side of the membrane. The helical transmembrane segment at 757–777 (CIFFCPVAFFSFAPLITAISI) threads the bilayer. Residues 778–783 (SPEIMK) are Extracellular-facing. A helical membrane pass occupies residues 784-804 (SVTLIFFPLPACLNPVLYVFF). The Cytoplasmic portion of the chain corresponds to 805 to 951 (NPKFKEDWKL…YAYNLPRVKD (147 aa)). Position 920 is a phosphoserine (Ser920).

Belongs to the G-protein coupled receptor 1 family. Expressed in multiple steroidogenic tissues: placenta, ovary, testis and adrenal. Expressed also in spinal cord, thyroid, stomach, trachea, heart, pancreas, kidney, prostate and spleen.

It is found in the cell membrane. Functionally, receptor for R-spondins that potentiates the canonical Wnt signaling pathway and is involved in the formation of various organs. Upon binding to R-spondins (RSPO1, RSPO2, RSPO3 or RSPO4), associates with phosphorylated LRP6 and frizzled receptors that are activated by extracellular Wnt receptors, triggering the canonical Wnt signaling pathway to increase expression of target genes. In contrast to classical G-protein coupled receptors, does not activate heterotrimeric G-proteins to transduce the signal. Its function as activator of the Wnt signaling pathway is required for the development of various organs, including liver, kidney, intestine, bone, reproductive tract and eye. May also act as a receptor for norrin (NDP), such results however require additional confirmation in vivo. Required during spermatogenesis to activate the Wnt signaling pathway in peritubular myoid cells. Required for the maintenance of intestinal stem cells and Paneth cell differentiation in postnatal intestinal crypts. Acts as a regulator of bone formation and remodeling. Involved in kidney development; required for maintaining the ureteric bud in an undifferentiated state. Involved in the development of the anterior segment of the eye. Required during erythropoiesis. Also acts as a negative regulator of innate immunity by inhibiting TLR2/TLR4 associated pattern-recognition and pro-inflammatory cytokine production. Plays an important role in regulating the circadian rhythms of plasma lipids, partially through regulating the rhythmic expression of MTTP. Required for proper development of GnRH neurons (gonadotropin-releasing hormone expressing neurons) that control the release of reproductive hormones from the pituitary gland. This is Leucine-rich repeat-containing G-protein coupled receptor 4 (LGR4) from Homo sapiens (Human).